We begin with the raw amino-acid sequence, 431 residues long: Enolase (431 aa).

Position 162 (Gln162) interacts with (2R)-2-phosphoglycerate. Catalysis depends on Glu204, which acts as the Proton donor. 3 residues coordinate Mg(2+): Asp241, Glu288, and Asp315. (2R)-2-phosphoglycerate is bound by residues Lys340, Arg369, Ser370, and Lys391. Residue Lys340 is the Proton acceptor of the active site.

Belongs to the enolase family. Requires Mg(2+) as cofactor.

The protein resides in the cytoplasm. The protein localises to the secreted. It localises to the cell surface. It catalyses the reaction (2R)-2-phosphoglycerate = phosphoenolpyruvate + H2O. The protein operates within carbohydrate degradation; glycolysis; pyruvate from D-glyceraldehyde 3-phosphate: step 4/5. In terms of biological role, catalyzes the reversible conversion of 2-phosphoglycerate (2-PG) into phosphoenolpyruvate (PEP). It is essential for the degradation of carbohydrates via glycolysis. This Phocaeicola vulgatus (strain ATCC 8482 / DSM 1447 / JCM 5826 / CCUG 4940 / NBRC 14291 / NCTC 11154) (Bacteroides vulgatus) protein is Enolase.